A 509-amino-acid chain; its full sequence is MQSWSRVYCSLVKRGHFSRISHGLQGVSVVPLRTYADQPIDADVTVIGSGPGGYVAAIKAAQLGFKTVCVEKNETLGGTCLNVGCIPSKALLNNSHFYHLAHGKDFASRGIEMSEVRLNLEKMMEQKSNAVKALTGGIAHLFKQNKVVHVNGYGKITGKNQVTATKADGSTQVIDTKNILIATGSEVTPFPGITIDEDTIVSSTGALSLKKVPEKLVVIGAGVIGVELGSVWQRLGADVTAVEFLGHVGGVGIDMEISKNFQRILQKQGFKFKLNTKVTGATKKSDGKIDVSIEAASGGKAEVITCDVLLVCIGRRPFTQNLGLEELGIELDTRGRIPVNTRFQTKIPNIYAIGDVVAGPMLAHKAEDEGIICVEGMAGGAVHIDYNCVPSVIYTHPEVAWVGKSEEQLKEEGIEYKVGKFPFAANSRAKTNADTDGMVKILGQKSTDRVLGAHILGPGAGEMVNEAALALEYGASCEDIARVCHAHPTLSEAFREANLAASFGKSINF.

The transit peptide at 1–35 directs the protein to the mitochondrion; the sequence is MQSWSRVYCSLVKRGHFSRISHGLQGVSVVPLRTY. K66 carries the N6-acetyllysine; alternate modification. Residue K66 is modified to N6-succinyllysine; alternate. Residues 71–80 and K89 contribute to the FAD site; that span reads EKNETLGGTC. Residues C80 and C85 are joined by a disulfide bond. Residues K104, K122, K132, and K143 each carry the N6-acetyllysine; alternate modification. K104, K122, K132, and K143 each carry N6-succinyllysine; alternate. G154 contacts FAD. An N6-succinyllysine mark is found at K159 and K166. 183–185 is a binding site for FAD; it reads TGS. NAD(+)-binding positions include 220–227 and E243; that span reads GAGVIGVE. N6-succinyllysine occurs at positions 273 and 277. V278 provides a ligand contact to NAD(+). Phosphoserine occurs at positions 285 and 297. Residue G314 participates in NAD(+) binding. At K346 the chain carries N6-acetyllysine. Residues D355 and 361–364 each bind FAD; that span reads MLAH. Position 410 is an N6-acetyllysine; alternate (K410). K410 carries the N6-succinyllysine; alternate modification. An N6-acetyllysine mark is found at K417 and K420. An N6-succinyllysine modification is found at K430. Catalysis depends on H487, which acts as the Proton acceptor. K505 bears the N6-acetyllysine; alternate mark. At K505 the chain carries N6-succinyllysine; alternate.

It belongs to the class-I pyridine nucleotide-disulfide oxidoreductase family. As to quaternary structure, homodimer. Part of the multimeric pyruvate dehydrogenase complex that contains multiple copies of pyruvate dehydrogenase (subunits PDHA (PDHA1 or PDHA2) and PDHB, E1), dihydrolipoamide acetyltransferase (DLAT, E2) and lipoamide dehydrogenase (DLD, E3). These subunits are bound to an inner core composed of about 48 DLAT and 12 PDHX molecules (by non covalent bonds). The 2-oxoglutarate dehydrogenase complex is composed of OGDH (2-oxoglutarate dehydrogenase; E1), DLST (dihydrolipoamide succinyltransferase; E2), DLD (dihydrolipoamide dehydrogenase; E3) and the assembly factor KGD4. It contains multiple copies of the three enzymatic components (E1, E2 and E3). In the nucleus, the 2-oxoglutarate dehydrogenase complex associates with KAT2A. Interacts with PDHX. It depends on FAD as a cofactor. Tyrosine phosphorylated.

Its subcellular location is the mitochondrion matrix. It localises to the nucleus. The protein localises to the cell projection. The protein resides in the cilium. It is found in the flagellum. Its subcellular location is the cytoplasmic vesicle. It localises to the secretory vesicle. The protein localises to the acrosome. It catalyses the reaction N(6)-[(R)-dihydrolipoyl]-L-lysyl-[protein] + NAD(+) = N(6)-[(R)-lipoyl]-L-lysyl-[protein] + NADH + H(+). In terms of biological role, lipoamide dehydrogenase is a component of the glycine cleavage system as well as an E3 component of three alpha-ketoacid dehydrogenase complexes (pyruvate-, alpha-ketoglutarate-, and branched-chain amino acid-dehydrogenase complex). The 2-oxoglutarate dehydrogenase complex is mainly active in the mitochondrion. A fraction of the 2-oxoglutarate dehydrogenase complex also localizes in the nucleus and is required for lysine succinylation of histones: associates with KAT2A on chromatin and provides succinyl-CoA to histone succinyltransferase KAT2A. In monomeric form may have additional moonlighting function as serine protease. Involved in the hyperactivation of spermatazoa during capacitation and in the spermatazoal acrosome reaction. This is Dihydrolipoyl dehydrogenase, mitochondrial (DLD) from Bos taurus (Bovine).